A 314-amino-acid chain; its full sequence is 4-hydroxy-3-methylbut-2-enyl diphosphate reductase (314 aa).

Cys12 is a binding site for [4Fe-4S] cluster. The (2E)-4-hydroxy-3-methylbut-2-enyl diphosphate site is built by His41 and His74. Positions 41 and 74 each coordinate dimethylallyl diphosphate. His41 and His74 together coordinate isopentenyl diphosphate. Residue Cys96 coordinates [4Fe-4S] cluster. His124 serves as a coordination point for (2E)-4-hydroxy-3-methylbut-2-enyl diphosphate. His124 is a dimethylallyl diphosphate binding site. His124 is a binding site for isopentenyl diphosphate. The active-site Proton donor is Glu126. Thr167 is a (2E)-4-hydroxy-3-methylbut-2-enyl diphosphate binding site. Cys197 lines the [4Fe-4S] cluster pocket. Residues Ser225, Ser226, Asn227, and Ser269 each coordinate (2E)-4-hydroxy-3-methylbut-2-enyl diphosphate. Positions 225, 226, 227, and 269 each coordinate dimethylallyl diphosphate. 4 residues coordinate isopentenyl diphosphate: Ser225, Ser226, Asn227, and Ser269.

Belongs to the IspH family. [4Fe-4S] cluster is required as a cofactor.

The enzyme catalyses isopentenyl diphosphate + 2 oxidized [2Fe-2S]-[ferredoxin] + H2O = (2E)-4-hydroxy-3-methylbut-2-enyl diphosphate + 2 reduced [2Fe-2S]-[ferredoxin] + 2 H(+). It carries out the reaction dimethylallyl diphosphate + 2 oxidized [2Fe-2S]-[ferredoxin] + H2O = (2E)-4-hydroxy-3-methylbut-2-enyl diphosphate + 2 reduced [2Fe-2S]-[ferredoxin] + 2 H(+). Its pathway is isoprenoid biosynthesis; dimethylallyl diphosphate biosynthesis; dimethylallyl diphosphate from (2E)-4-hydroxy-3-methylbutenyl diphosphate: step 1/1. It participates in isoprenoid biosynthesis; isopentenyl diphosphate biosynthesis via DXP pathway; isopentenyl diphosphate from 1-deoxy-D-xylulose 5-phosphate: step 6/6. Its function is as follows. Catalyzes the conversion of 1-hydroxy-2-methyl-2-(E)-butenyl 4-diphosphate (HMBPP) into a mixture of isopentenyl diphosphate (IPP) and dimethylallyl diphosphate (DMAPP). Acts in the terminal step of the DOXP/MEP pathway for isoprenoid precursor biosynthesis. This chain is 4-hydroxy-3-methylbut-2-enyl diphosphate reductase, found in Histophilus somni (strain 2336) (Haemophilus somnus).